The sequence spans 212 residues: Redox-sensing transcriptional repressor Rex (212 aa).

A DNA-binding region (H-T-H motif) is located at residues 17 to 56; sequence LYYRIFKRFNTDGIEKASSKQIADALGIDSATVRRDFSYF. Residue 91-96 participates in NAD(+) binding; it reads GCGNIG.

Belongs to the transcriptional regulatory Rex family. In terms of assembly, homodimer.

Its subcellular location is the cytoplasm. Functionally, modulates transcription in response to changes in cellular NADH/NAD(+) redox state. This chain is Redox-sensing transcriptional repressor Rex, found in Streptococcus agalactiae serotype III (strain NEM316).